The sequence spans 237 residues: Concanavalin-A (237 aa).

Mn(2+) is bound by residues E8 and D10. The Ca(2+) site is built by D10, Y12, N14, and D19. N14 contributes to the a carbohydrate binding site. Residues D19 and H24 each contribute to the Mn(2+) site. Residues 98 to 100, D208, and R228 each bind a carbohydrate; that span reads GLY.

It belongs to the leguminous lectin family. In terms of assembly, homotetramer. In terms of processing, concanavalin A-like lectins of the Diocleinae subtribe undergo proteolytic processing referred to as circular permutation. The propeptide is split into an N-terminal and a C-terminal part, the gamma and beta chain, respectively. These are then religated in beta-gamma order to form the mature alpha chain. The beta and gamma chains can often be detected in cell extracts. Residues 1-118 of the mature chain, as displayed here, probably constitute the beta chain in the propeptide, residues 119-237 the gamma chain.

In terms of biological role, glucose/D-mannose specific lectin. The polypeptide is Concanavalin-A (Canavalia cathartica (Jackbean)).